The following is a 387-amino-acid chain: Glucose-1-phosphate adenylyltransferase (387 aa).

Residues Tyr-99, Gly-164, 179-180 (EK), and Ser-190 contribute to the alpha-D-glucose 1-phosphate site.

The protein belongs to the bacterial/plant glucose-1-phosphate adenylyltransferase family. As to quaternary structure, homotetramer.

It carries out the reaction alpha-D-glucose 1-phosphate + ATP + H(+) = ADP-alpha-D-glucose + diphosphate. It functions in the pathway glycan biosynthesis; glycogen biosynthesis. In terms of biological role, involved in the biosynthesis of ADP-glucose, a building block required for the elongation reactions to produce glycogen. Catalyzes the reaction between ATP and alpha-D-glucose 1-phosphate (G1P) to produce pyrophosphate and ADP-Glc. The sequence is that of Glucose-1-phosphate adenylyltransferase from Geobacillus stearothermophilus (Bacillus stearothermophilus).